Reading from the N-terminus, the 313-residue chain is MPIGDYELHKEIGKGAFSVVFLVTEKKTKKQWAMKIIDKKSSSKAALETEIEIMKKVDHPNIVKMHEYFESTDKIYLVVELVTGGPLFDRIVDKKSFTEKEAKLITQQLLQSLVYLHSIGIVHRDLKPENLLLKTPTDLTVALSDFGLSKIVGDDVFMKTTCGTPSYVAPEVLNNISNSPTAYSDAVDMWGVGVITYILLCGFPPFYSEDIRKLFESILSASYDFPNDYWGNVSKEAKHFINCLLTVEPTKRYSAKQALEHPWIIENNQTQPLPHWNDQIKKYMVIRRKESQKFGAELVWKPQAQTTNVKPTK.

Residues 6 to 264 form the Protein kinase domain; that stretch reads YELHKEIGKG…AKQALEHPWI (259 aa). ATP is bound by residues 12–20 and lysine 35; that span reads IGKGAFSVV. The Proton acceptor role is filled by aspartate 125.

Belongs to the protein kinase superfamily. CAMK Ser/Thr protein kinase family. CaMK subfamily.

The enzyme catalyses L-seryl-[myosin light chain] + ATP = O-phospho-L-seryl-[myosin light chain] + ADP + H(+). It catalyses the reaction L-threonyl-[myosin light chain] + ATP = O-phospho-L-threonyl-[myosin light chain] + ADP + H(+). Its activity is regulated as follows. Does not have a calmodulin-binding domain. Its function is as follows. May phosphorylate a specific serine in the N-terminus of a myosin light chain. This chain is Probable myosin light chain kinase DDB_G0292624, found in Dictyostelium discoideum (Social amoeba).